We begin with the raw amino-acid sequence, 390 residues long: uncharacterized protein (390 aa).

The protein belongs to the arsA ATPase family.

This is an uncharacterized protein from Streptomyces coelicolor (strain ATCC BAA-471 / A3(2) / M145).